Here is an 800-residue protein sequence, read N- to C-terminus: Elongation factor G, mitochondrial (800 aa).

The N-terminal 59 residues, 1-59 (MRVIRAVATLHAGRAAAVRQGVRSVSLGACRAAVETPSLRSAGSQFESRRLFSRSSYLR), are a transit peptide targeting the mitochondrion. The tr-type G domain occupies 99–385 (ARVRNIGIAA…AVCDYLPNPN (287 aa)). GTP-binding positions include 108-115 (AHIDSGKT), 183-187 (DTPGH), and 237-240 (NKMD).

Belongs to the TRAFAC class translation factor GTPase superfamily. Classic translation factor GTPase family. EF-G/EF-2 subfamily.

The protein localises to the mitochondrion. It functions in the pathway protein biosynthesis; polypeptide chain elongation. Its function is as follows. Mitochondrial GTPase that catalyzes the GTP-dependent ribosomal translocation step during translation elongation. During this step, the ribosome changes from the pre-translocational (PRE) to the post-translocational (POST) state as the newly formed A-site-bound peptidyl-tRNA and P-site-bound deacylated tRNA move to the P and E sites, respectively. Catalyzes the coordinated movement of the two tRNA molecules, the mRNA and conformational changes in the ribosome. The protein is Elongation factor G, mitochondrial (mef1) of Neurospora crassa (strain ATCC 24698 / 74-OR23-1A / CBS 708.71 / DSM 1257 / FGSC 987).